A 209-amino-acid polypeptide reads, in one-letter code: Uracil phosphoribosyltransferase (209 aa).

Residues R79, R104, and 131–139 contribute to the 5-phospho-alpha-D-ribose 1-diphosphate site; that span reads DPMLATGVS. Uracil-binding positions include I194 and 199-201; that span reads GDA. Residue D200 coordinates 5-phospho-alpha-D-ribose 1-diphosphate.

Belongs to the UPRTase family. It depends on Mg(2+) as a cofactor.

It carries out the reaction UMP + diphosphate = 5-phospho-alpha-D-ribose 1-diphosphate + uracil. It functions in the pathway pyrimidine metabolism; UMP biosynthesis via salvage pathway; UMP from uracil: step 1/1. Allosterically activated by GTP. Its function is as follows. Catalyzes the conversion of uracil and 5-phospho-alpha-D-ribose 1-diphosphate (PRPP) to UMP and diphosphate. In Thermotoga maritima (strain ATCC 43589 / DSM 3109 / JCM 10099 / NBRC 100826 / MSB8), this protein is Uracil phosphoribosyltransferase.